The sequence spans 478 residues: Protein trichome birefringence-like 20 (478 aa).

Residues 10–30 (IGLVIFPLILLTIAPILYLFF) form a helical; Signal-anchor for type II membrane protein membrane-spanning segment. The span at 50–68 (SSAISSPSRYNHSSSSSDS) shows a compositional bias: low complexity. The tract at residues 50–125 (SSAISSPSRY…KEHRRKKRKR (76 aa)) is disordered. A compositionally biased stretch (polar residues) spans 92–110 (SSSLHNNDRLSISSSNGHH). Residues 112–125 (VTPKKEHRRKKRKR) are compositionally biased toward basic residues. A GDS motif motif is present at residues 200–202 (GDS). The DCXHWCLPGXXDXWN motif signature appears at 447–461 (DCVHWCLPGPIDSWN).

It belongs to the PC-esterase family. TBL subfamily.

It is found in the membrane. May act as a bridging protein that binds pectin and other cell wall polysaccharides. Probably involved in maintaining esterification of pectins. May be involved in the specific O-acetylation of cell wall polymers. This Arabidopsis thaliana (Mouse-ear cress) protein is Protein trichome birefringence-like 20 (TBL20).